Consider the following 434-residue polypeptide: MLLKNLHSLLQLPIFSNGADKGIEPNCPINIPLSCSNKTDIDNSCCFEYPGGIFLQTQFWNYFPSKNDLNETELVKELGPLDSFTIHGLWPDNCHGGYQQFCNRSLQIDDVYYLLHDKKFNNNDTSLQISGEKLLEYLDLYWKSNNGNHESLWIHEFNKHGTCISTIRPECYTEWGANSVDRKRAVYDYFRITYNLFKKLDTFSTLEKNNIVPSVDNSYSLEQIEAALSKEFEGKKVFIGCDRHNSLNEVWYYNHLKGSLLSEMFVPMDSLAIRTNCKKDGIKFFPKGYVPTFRRRPNKGARYRGVVRLSNINNGDQMQGFLIKNGHWMSQGTPANYELIKSPYGNYYLRTNQGFCDIISSSSNELVCKFRNIKDAGQFDFDPTKGGDGYIGYSGNYNWGGDTYPRRRNQSPIFSVDDEQNSKKYKFKLKFIKN.

The N-terminal stretch at 1–18 (MLLKNLHSLLQLPIFSNG) is a signal peptide. Disulfide bonds link cysteine 27–cysteine 46, cysteine 35–cysteine 94, cysteine 45–cysteine 171, cysteine 102–cysteine 163, and cysteine 241–cysteine 277. 2 N-linked (GlcNAc...) asparagine glycosylation sites follow: asparagine 37 and asparagine 70. The active site involves histidine 87. N-linked (GlcNAc...) asparagine glycosylation is found at asparagine 103 and asparagine 123. Catalysis depends on residues glutamate 156 and histidine 160.

This sequence belongs to the RNase T2 family. In terms of processing, N-glycosylated.

The protein localises to the vacuole lumen. It is found in the cytoplasm. It carries out the reaction a ribonucleotidyl-ribonucleotide-RNA + H2O = a 3'-end 3'-phospho-ribonucleotide-RNA + a 5'-end dephospho-ribonucleoside-RNA + H(+). In terms of biological role, rnase which modulates cell survival under stress conditions. Released from the vacuole to the cytoplasm during stress to promote tRNA and rRNA cleavage and to activate separately a downstream pathway that promotes cell death. Involved in cell size, vacuolar morphology and growth at high temperatures and high salt concentration. This is Ribonuclease T2-like (RNY1) from Saccharomyces cerevisiae (strain ATCC 204508 / S288c) (Baker's yeast).